Here is a 526-residue protein sequence, read N- to C-terminus: Bifunctional purine biosynthesis protein PurH (526 aa).

In terms of domain architecture, MGS-like spans 15–161 (DVVPIRRALI…KNHANVAIVV (147 aa)).

This sequence belongs to the PurH family.

It carries out the reaction (6R)-10-formyltetrahydrofolate + 5-amino-1-(5-phospho-beta-D-ribosyl)imidazole-4-carboxamide = 5-formamido-1-(5-phospho-D-ribosyl)imidazole-4-carboxamide + (6S)-5,6,7,8-tetrahydrofolate. The enzyme catalyses IMP + H2O = 5-formamido-1-(5-phospho-D-ribosyl)imidazole-4-carboxamide. It participates in purine metabolism; IMP biosynthesis via de novo pathway; 5-formamido-1-(5-phospho-D-ribosyl)imidazole-4-carboxamide from 5-amino-1-(5-phospho-D-ribosyl)imidazole-4-carboxamide (10-formyl THF route): step 1/1. Its pathway is purine metabolism; IMP biosynthesis via de novo pathway; IMP from 5-formamido-1-(5-phospho-D-ribosyl)imidazole-4-carboxamide: step 1/1. The polypeptide is Bifunctional purine biosynthesis protein PurH (Leifsonia xyli subsp. xyli (strain CTCB07)).